Consider the following 270-residue polypeptide: Putative envelope-preserving system protein Rv2743c (270 aa).

The next 2 helical transmembrane spans lie at Ala50–Ala72 and Phe77–Leu99.

In terms of assembly, interacts with PspA and Rv2742c.

The protein resides in the membrane. Involved in preservation of envelope integrity and tolerance to surface stress. Reverses the inhibitory effect of PspA on ClgR activity. Facilitates intracellular growth of M.tuberculosis. The sequence is that of Putative envelope-preserving system protein Rv2743c from Mycobacterium tuberculosis (strain ATCC 25618 / H37Rv).